A 257-amino-acid polypeptide reads, in one-letter code: Imidazole glycerol phosphate synthase subunit HisF (257 aa).

Active-site residues include Asp12 and Asp131.

It belongs to the HisA/HisF family. In terms of assembly, heterodimer of HisH and HisF.

Its subcellular location is the cytoplasm. It carries out the reaction 5-[(5-phospho-1-deoxy-D-ribulos-1-ylimino)methylamino]-1-(5-phospho-beta-D-ribosyl)imidazole-4-carboxamide + L-glutamine = D-erythro-1-(imidazol-4-yl)glycerol 3-phosphate + 5-amino-1-(5-phospho-beta-D-ribosyl)imidazole-4-carboxamide + L-glutamate + H(+). It participates in amino-acid biosynthesis; L-histidine biosynthesis; L-histidine from 5-phospho-alpha-D-ribose 1-diphosphate: step 5/9. In terms of biological role, IGPS catalyzes the conversion of PRFAR and glutamine to IGP, AICAR and glutamate. The HisF subunit catalyzes the cyclization activity that produces IGP and AICAR from PRFAR using the ammonia provided by the HisH subunit. This Burkholderia orbicola (strain MC0-3) protein is Imidazole glycerol phosphate synthase subunit HisF.